Here is a 91-residue protein sequence, read N- to C-terminus: Large ribosomal subunit protein bL27 (91 aa).

Belongs to the bacterial ribosomal protein bL27 family. As to quaternary structure, part of the 50S ribosomal subunit. Contacts protein L18.

Its function is as follows. Binds the 5S and 23S rRNAs and also the tRNA in the P site. The polypeptide is Large ribosomal subunit protein bL27 (rpmA) (Deinococcus radiodurans (strain ATCC 13939 / DSM 20539 / JCM 16871 / CCUG 27074 / LMG 4051 / NBRC 15346 / NCIMB 9279 / VKM B-1422 / R1)).